Consider the following 159-residue polypeptide: Sec-independent protein translocase protein TatB (159 aa).

Residues 1–21 form a helical membrane-spanning segment; sequence MIDIGLSKMALIGAVALIVIG.

Belongs to the TatB family. The Tat system comprises two distinct complexes: a TatABC complex, containing multiple copies of TatA, TatB and TatC subunits, and a separate TatA complex, containing only TatA subunits. Substrates initially bind to the TatABC complex, which probably triggers association of the separate TatA complex to form the active translocon.

The protein localises to the cell inner membrane. In terms of biological role, part of the twin-arginine translocation (Tat) system that transports large folded proteins containing a characteristic twin-arginine motif in their signal peptide across membranes. Together with TatC, TatB is part of a receptor directly interacting with Tat signal peptides. TatB may form an oligomeric binding site that transiently accommodates folded Tat precursor proteins before their translocation. The sequence is that of Sec-independent protein translocase protein TatB from Acidovorax sp. (strain JS42).